Reading from the N-terminus, the 225-residue chain is MNSIQFPLLDRTAQNSVISTTLNDLSNWSRLSSLWPLLYGTSCCFIEFASLIGSRFDFDRYGLVPRSSPRQADLILTAGTVTMKMAPSLVRLYEQMPEPKYVIAMGACTITGGMFSTDSYSTVRGVDKLIPVDVYLPGCPPKPEAVIDAITKLRKKISRELYEDRIRSQRVNRCFTTNHKFHVRRSIHTGNYDQRVLYQPPSTSEIPTEIFFKYKNSVSSPELVN.

4 residues coordinate [4Fe-4S] cluster: Cys43, Cys44, Cys108, and Cys139.

Belongs to the complex I 20 kDa subunit family. NDH is composed of at least 16 different subunits, 5 of which are encoded in the nucleus. The cofactor is [4Fe-4S] cluster.

It localises to the plastid. It is found in the chloroplast thylakoid membrane. It catalyses the reaction a plastoquinone + NADH + (n+1) H(+)(in) = a plastoquinol + NAD(+) + n H(+)(out). The enzyme catalyses a plastoquinone + NADPH + (n+1) H(+)(in) = a plastoquinol + NADP(+) + n H(+)(out). Its function is as follows. NDH shuttles electrons from NAD(P)H:plastoquinone, via FMN and iron-sulfur (Fe-S) centers, to quinones in the photosynthetic chain and possibly in a chloroplast respiratory chain. The immediate electron acceptor for the enzyme in this species is believed to be plastoquinone. Couples the redox reaction to proton translocation, and thus conserves the redox energy in a proton gradient. In Atropa belladonna (Belladonna), this protein is NAD(P)H-quinone oxidoreductase subunit K, chloroplastic.